The sequence spans 156 residues: VapC ribonuclease AF_1683 (156 aa).

One can recognise a PINc domain in the interval 4-125 (LIDTGIFFGF…KLISYDSRFS (122 aa)). Residues Asp6 and Asp103 each coordinate Mg(2+).

The protein belongs to the PINc/VapC protein family. It depends on Mg(2+) as a cofactor.

Toxic component of a type II toxin-antitoxin (TA) system. An RNase. This Archaeoglobus fulgidus (strain ATCC 49558 / DSM 4304 / JCM 9628 / NBRC 100126 / VC-16) protein is VapC ribonuclease AF_1683.